The sequence spans 137 residues: MKQRTLSIIKPDALKKKVVGKIIDRFESNGLEVVAMKRLHLSVKDAENFYAIHRERPFFKDLIEFMVSGPVVVMVLEGKDAVAKNRDLMGATDPKLAQKGTIRADFAESIDANAVHGSDSLENAHNEIAFFFAARDL.

Positions 10, 58, 86, 92, 103, and 113 each coordinate ATP. The Pros-phosphohistidine intermediate role is filled by histidine 116.

The protein belongs to the NDK family. As to quaternary structure, homotetramer. Requires Mg(2+) as cofactor.

It localises to the cytoplasm. The enzyme catalyses a 2'-deoxyribonucleoside 5'-diphosphate + ATP = a 2'-deoxyribonucleoside 5'-triphosphate + ADP. It catalyses the reaction a ribonucleoside 5'-diphosphate + ATP = a ribonucleoside 5'-triphosphate + ADP. In terms of biological role, major role in the synthesis of nucleoside triphosphates other than ATP. The ATP gamma phosphate is transferred to the NDP beta phosphate via a ping-pong mechanism, using a phosphorylated active-site intermediate. This Helicobacter pylori (strain ATCC 700392 / 26695) (Campylobacter pylori) protein is Nucleoside diphosphate kinase.